The primary structure comprises 296 residues: Ribosomal RNA small subunit methyltransferase A (296 aa).

Positions 32, 34, 59, 80, 105, and 130 each coordinate S-adenosyl-L-methionine.

The protein belongs to the class I-like SAM-binding methyltransferase superfamily. rRNA adenine N(6)-methyltransferase family. RsmA subfamily.

It localises to the cytoplasm. The enzyme catalyses adenosine(1518)/adenosine(1519) in 16S rRNA + 4 S-adenosyl-L-methionine = N(6)-dimethyladenosine(1518)/N(6)-dimethyladenosine(1519) in 16S rRNA + 4 S-adenosyl-L-homocysteine + 4 H(+). Its function is as follows. Specifically dimethylates two adjacent adenosines (A1518 and A1519) in the loop of a conserved hairpin near the 3'-end of 16S rRNA in the 30S particle. May play a critical role in biogenesis of 30S subunits. The sequence is that of Ribosomal RNA small subunit methyltransferase A from Lactiplantibacillus plantarum (strain ATCC BAA-793 / NCIMB 8826 / WCFS1) (Lactobacillus plantarum).